The sequence spans 154 residues: Myoglobin (154 aa).

The Globin domain maps to 2–148; it reads GLSDGEWQLV…FRHDMAAKYK (147 aa). Ser4 bears the Phosphoserine mark. Nitrite is bound at residue His65. His65 lines the O2 pocket. Thr68 is modified (phosphothreonine). His94 lines the heme b pocket.

This sequence belongs to the globin family. In terms of assembly, monomeric.

The protein localises to the cytoplasm. It localises to the sarcoplasm. The catalysed reaction is Fe(III)-heme b-[protein] + nitric oxide + H2O = Fe(II)-heme b-[protein] + nitrite + 2 H(+). It catalyses the reaction H2O2 + AH2 = A + 2 H2O. Monomeric heme protein which primary function is to store oxygen and facilitate its diffusion within muscle tissues. Reversibly binds oxygen through a pentacoordinated heme iron and enables its timely and efficient release as needed during periods of heightened demand. Depending on the oxidative conditions of tissues and cells, and in addition to its ability to bind oxygen, it also has a nitrite reductase activity whereby it regulates the production of bioactive nitric oxide. Under stress conditions, like hypoxia and anoxia, it also protects cells against reactive oxygen species thanks to its pseudoperoxidase activity. The polypeptide is Myoglobin (MB) (Osphranter rufus (Red kangaroo)).